A 467-amino-acid polypeptide reads, in one-letter code: Cis-zeatin O-glucosyltransferase 1 (467 aa).

Residue His-21 is the Proton acceptor of the active site. The an anthocyanidin site is built by His-21 and Asn-91. Residue Asp-127 is the Charge relay of the active site. Residues Ala-343, Gln-345, His-360, Trp-363, Asn-364, Ser-365, Glu-368, Asp-384, and Gln-385 each contribute to the UDP-alpha-D-glucose site.

Belongs to the UDP-glycosyltransferase family. In terms of tissue distribution, highly expressed in root. Expressed at lower level in kernel and cob. Weakly expressed in leaves. Weakly or not expressed in stems.

It carries out the reaction cis-zeatin + UDP-alpha-D-glucose = O-beta-D-glucosyl-cis-zeatin + UDP + H(+). Functionally, utilizes UDP-glucose as the sugar donor and catalyzes the formation of O-beta-D-glucosyl-cis-zeatin from cis-zeatin. May regulate active versus storage forms of cytokinins and could have an impact on seed growth. The chain is Cis-zeatin O-glucosyltransferase 1 (CISZOG1) from Zea mays (Maize).